Reading from the N-terminus, the 479-residue chain is MAGTRWVLGALLRGCGCNCSSCRRTGAACLPFYSAAGTFPSGVSGRRRLLLLLGAAAAAASQTRGLQLGPAAAGRLAGPIPARPSAAAAAAASYSALRAPLFPRSLAAAAGPARGYSQESKTTYLEDLPPLPEYELSPSKLGDEVDDVYLIRAQGLPWSCTVEDVLNFFSDCRIRNSENGIHFLLNRDGKRRGDALIEMESEQDVQKALEKHRMYMGQRYVEVYEINNEDVDALMKSLQVKPSPVLSDGVVRLRGLPYSCNEKDIVDFFAGLNIVDITFVMDYRGRRKTGEAYVQFEEPEMANQALLKHREEIGNRYIEIFPSRRNEVRTHVGSHKGKKMTSSPPTKYITEPEVVFEEHEVNEDIRPMTAFESDKEIELPKEMSEKLPEAVDFGTLPSLHFVHMRGLPFQANAQDIINFFAPLKPVRITMEYSSSGKATGEADVHFDTHEDAVAAMLKDRSHVQHRYIELFLNSCPKGK.

The N-terminal 116 residues, 1 to 116 (MAGTRWVLGA…AAAAGPARGY (116 aa)), are a transit peptide targeting the mitochondrion. 2 RRM domains span residues 149–245 (YLIR…PSPV) and 249–325 (GVVR…PSRR). A Phosphoserine modification is found at Ser-243. A Phosphoserine modification is found at Ser-334. Positions 400-479 (HFVHMRGLPF…LFLNSCPKGK (80 aa)) constitute an RRM 3 domain.

As to quaternary structure, monomer. Found in a complex with DDX28, DHX30, FASTKD2 and FASTKD5. Interacts with the mitochondrial RNase P complex subunit TRMT10C/MRPP1. Interacts with the 2 components of the mitochondrial degradosome complex, PNPT1 and SUPV3L1, in an RNA-dependent manner.

The protein resides in the mitochondrion matrix. Regulator of post-transcriptional mitochondrial gene expression, required for assembly of the mitochondrial ribosome and for recruitment of mRNA and lncRNA. Binds RNAs containing the 14 base G-rich element. Preferentially binds RNAs transcribed from three contiguous genes on the light strand of mtDNA, the ND6 mRNA, and the long non-coding RNAs for MT-CYB and MT-ND5, each of which contains multiple consensus binding sequences. Involved in the degradosome-mediated decay of non-coding mitochondrial transcripts (MT-ncRNA) and tRNA-like molecules. Acts by unwinding G-quadruplex RNA structures in MT-ncRNA, thus facilitating their degradation by the degradosome. G-quadruplexes (G4) are non-canonical 4 stranded structures formed by transcripts from the light strand of mtDNA. This is G-rich sequence factor 1 (Grsf1) from Mus musculus (Mouse).